We begin with the raw amino-acid sequence, 62 residues long: Zinc finger-containing protein P28b (62 aa).

The segment at methionine 1–arginine 46 adopts an RING-type; degenerate zinc-finger fold.

This Vaccinia virus (strain Western Reserve) (VACV) protein is Zinc finger-containing protein P28b.